The chain runs to 84 residues: Small ribosomal subunit protein uS17 (84 aa).

This sequence belongs to the universal ribosomal protein uS17 family. Part of the 30S ribosomal subunit.

Its function is as follows. One of the primary rRNA binding proteins, it binds specifically to the 5'-end of 16S ribosomal RNA. The chain is Small ribosomal subunit protein uS17 from Clostridium acetobutylicum (strain ATCC 824 / DSM 792 / JCM 1419 / IAM 19013 / LMG 5710 / NBRC 13948 / NRRL B-527 / VKM B-1787 / 2291 / W).